The following is a 466-amino-acid chain: Cytochrome c-552 (466 aa).

The N-terminal stretch at 1–27 (MVRILTKKSFALSALVAASLMASGAMA) is a signal peptide. H87 serves as a coordination point for heme c. The heme site is built by C115, C118, and K119. The heme c site is built by C153, C156, H157, C195, C198, and H199. Ca(2+) contacts are provided by E201, Y202, K250, and Q252. Y202 is a substrate binding site. H253 contacts substrate. Heme c contacts are provided by H264, C271, C274, H275, H290, C303, C306, H307, and H382.

Belongs to the cytochrome c-552 family. It depends on Ca(2+) as a cofactor. Heme c serves as cofactor.

The protein resides in the periplasm. The catalysed reaction is 6 Fe(III)-[cytochrome c] + NH4(+) + 2 H2O = 6 Fe(II)-[cytochrome c] + nitrite + 8 H(+). Its pathway is nitrogen metabolism; nitrate reduction (assimilation). Catalyzes the reduction of nitrite to ammonia, consuming six electrons in the process. The sequence is that of Cytochrome c-552 from Shewanella woodyi (strain ATCC 51908 / MS32).